The sequence spans 823 residues: Sphingomyelin phosphodiesterase 4 (823 aa).

A phosphoserine mark is found at Ser-130 and Ser-245. Thr-665 carries the phosphothreonine modification. Position 749 is a phosphoserine (Ser-749). The helical transmembrane segment at 776–796 (LLLLLMAFFVASLFCIGPLSC) threads the bilayer.

Mg(2+) serves as cofactor. Expressed in skeletal muscle (at protein level). As to expression, expressed in skeletal muscle but a lower levels than isoform 1 (at protein level).

Its subcellular location is the endoplasmic reticulum membrane. The protein localises to the golgi apparatus membrane. It localises to the nucleus envelope. It is found in the cell membrane. The protein resides in the sarcolemma. It catalyses the reaction a sphingomyelin + H2O = phosphocholine + an N-acylsphing-4-enine + H(+). Activated by phosphatidylserine and tumor necrosis factor (TNF). Inhibited by scyphostatin. Its function is as follows. Catalyzes the hydrolysis of membrane sphingomyelin to form phosphorylcholine and ceramide. It has a relevant role in the homeostasis of membrane sphingolipids, thereby influencing membrane integrity, and endoplasmic reticulum organization and function. May sensitize cells to DNA damage-induced apoptosis. In skeletal muscle, mediates TNF-stimulated oxidant production. This Mus musculus (Mouse) protein is Sphingomyelin phosphodiesterase 4 (Smpd4).